Consider the following 540-residue polypeptide: MVRTDGHTLSEKRNYQVTNSMFGASRKKFVEGVDSDYHDENMYYSQSSMFPHRSEKDMLASPSTSGQLSQFGASLYGQQSALGLPMRGMSNNTPQLNRSLSQGTQLPSHVTPTTGVPTMSLHTPPSPSRGILPMNPRNMMNHSQVGQGIGIPSRTNSMSSSGLGSPNRSSPSIICMPKQQPSRQPFTVNSMSGFGMNRNQAFGMNNSLSSNIFNGTDGSENVTGLDLSDFPALADRNRREGSGNPTPLINPLAGRAPYVGMVTKPANEQSQDFSIHNEDFPALPGSSYKDPTSSNDDSKSNLNTSGKTTSSTDGPKFPGDKSSTTQNNNQQKKGIQVLPDGRVTNIPQGMVTDQFGMIGLLTFIRAAETDPGMVHLALGSDLTTLGLNLNSPENLYPKFASPWASSPCRPQDIDFHVPSEYLTNIHIRDKLAAIKLGRYGEDLLFYLYYMNGGDVLQLLAAVELFNRDWRYHKEERVWITRAPGMEPTMKTNTYERGTYYFFDCLNWRKVAKEFHLEYDKLEERPHLPSTFNYNPAQQAF.

Position 93 is a phosphothreonine (T93). The segment covering 96 to 123 (LNRSLSQGTQLPSHVTPTTGVPTMSLHT) has biased composition (polar residues). The disordered stretch occupies residues 96–126 (LNRSLSQGTQLPSHVTPTTGVPTMSLHTPPS). Residues S126, S157, S165, S169, S242, and S274 each carry the phosphoserine modification. The tract at residues 276 to 342 (HNEDFPALPG…KGIQVLPDGR (67 aa)) is disordered. Composition is skewed to polar residues over residues 289–313 (KDPT…SSTD) and 321–333 (KSST…QQKK). Positions 437-540 (GRYGEDLLFY…FNYNPAQQAF (104 aa)) are repressor domain.

Belongs to the CNOT2/3/5 family. Component of the CCR4-NOT complex; distinct complexes seem to exist that differ in the participation of probably mutually exclusive catalytic subunits. In the complex interacts directly with CNOT3. Interacts with NCOR1, NCOR2. HDAC3 and GPS2. In terms of tissue distribution, ubiquitous. Highly expressed in brain, heart, thymus, spleen, kidney, liver, small intestine, placenta, lung and peripheral blood leukocytes.

The protein resides in the cytoplasm. It is found in the nucleus. Functionally, component of the CCR4-NOT complex which is one of the major cellular mRNA deadenylases and is linked to various cellular processes including bulk mRNA degradation, miRNA-mediated repression, translational repression during translational initiation and general transcription regulation. Additional complex functions may be a consequence of its influence on mRNA expression. Required for the CCR4-NOT complex structural integrity. Can repress transcription and may link the CCR4-NOT complex to transcriptional regulation; the repressive function may specifically involve the N-Cor repressor complex containing HDAC3, NCOR1 and NCOR2. Involved in the maintenance of embryonic stem (ES) cell identity. The sequence is that of CCR4-NOT transcription complex subunit 2 (CNOT2) from Homo sapiens (Human).